The chain runs to 81 residues: uncharacterized protein (81 aa).

Residues 1–58 (MPQSKQQFKRQGARQRDSKGKFVKARTGMATAPPAAVSTAAPTASTMTPTGSSTTATI) are disordered. Low complexity predominate over residues 30-58 (ATAPPAAVSTAAPTASTMTPTGSSTTATI).

This is an uncharacterized protein from Caenorhabditis elegans.